We begin with the raw amino-acid sequence, 300 residues long: F-box/LRR-repeat protein 15 (300 aa).

Met-1 is modified (N-acetylmethionine). One can recognise an F-box domain in the interval 19-66 (FLDLPWEDVLLPHVLNRVPLRQLLRLQRVSRAFRSLVQLHLAGLRRFD). Residues 113–269 (NPQLRSVALG…ESSLSRLRKR (157 aa)) form an interaction with SMURF1 region. 5 LRR repeats span residues 141–162 (RLQR…RGLA), 167–188 (ALEE…VYLA), 194–215 (GLRS…QELA), 220–241 (ELHH…RTLA), and 246–267 (VLRS…SRLR).

This sequence belongs to the FBXL15 family. Part of the SCF (SKP1-CUL1-F-box) E3 ubiquitin-protein ligase complex SCF(FBXL15) composed of CUL1, SKP1, RBX1 and FBXL15.

The protein localises to the cytoplasm. Its pathway is protein modification; protein ubiquitination. Its function is as follows. Substrate recognition component of a SCF (SKP1-CUL1-F-box protein) E3 ubiquitin-protein ligase complex which mediates the ubiquitination and subsequent proteasomal degradation of SMURF1, thereby acting as a positive regulator of the BMP signaling pathway. Required for dorsal/ventral pattern formation and bone mass maintenance. Also mediates ubiquitination of SMURF2 and WWP2. The polypeptide is F-box/LRR-repeat protein 15 (FBXL15) (Homo sapiens (Human)).